A 201-amino-acid polypeptide reads, in one-letter code: CASP-like protein 1E1 (201 aa).

Residues 1-36 (MESQFRPGFDVSQGAGGRASKFGDVVAPTSSTQLPG) lie on the Cytoplasmic side of the membrane. A helical transmembrane segment spans residues 37–57 (IILRIVAIVLTFISAVVMGAA). Over 58–87 (RQTTTVTGIDAETALLTSITVTVKSTYSAA) the chain is Extracellular. A helical transmembrane segment spans residues 88 to 108 (YVYFVVANVLVFFYSVVSLVL). Topologically, residues 109 to 127 (SMVNKARLTSMSLPFSIAD) are cytoplasmic. Residues 128 to 148 (LLMVVLLFSSNGAAAAISVVA) traverse the membrane as a helical segment. The Extracellular portion of the chain corresponds to 149 to 173 (EKGQQNLAGWDKICNLFGGLCARVN). Residues 174 to 194 (AAIVLSMLASVAYVILVVFGM) form a helical membrane-spanning segment. Residues 195 to 201 (ANLRRSQ) are Cytoplasmic-facing.

It belongs to the Casparian strip membrane proteins (CASP) family. In terms of assembly, homodimer and heterodimers.

It is found in the cell membrane. The protein is CASP-like protein 1E1 of Musa acuminata (Banana).